The following is a 246-amino-acid chain: 23S rRNA (guanosine-2'-O-)-methyltransferase RlmB (246 aa).

Glycine 196, isoleucine 216, and leucine 225 together coordinate S-adenosyl-L-methionine.

The protein belongs to the class IV-like SAM-binding methyltransferase superfamily. RNA methyltransferase TrmH family. RlmB subfamily. As to quaternary structure, homodimer.

Its subcellular location is the cytoplasm. The enzyme catalyses guanosine(2251) in 23S rRNA + S-adenosyl-L-methionine = 2'-O-methylguanosine(2251) in 23S rRNA + S-adenosyl-L-homocysteine + H(+). Functionally, specifically methylates the ribose of guanosine 2251 in 23S rRNA. The polypeptide is 23S rRNA (guanosine-2'-O-)-methyltransferase RlmB (Yersinia pestis).